We begin with the raw amino-acid sequence, 465 residues long: Sperm microtubule associated protein 2-like (465 aa).

Positions 1 to 29 (MENQEFLSSSAPSEVTDGQVSTEISTCSE) are enriched in polar residues. Positions 1 to 140 (MENQEFLSSS…REAKETELLP (140 aa)) are disordered. Composition is skewed to basic and acidic residues over residues 40 to 70 (LDTHRELEESEDPEKHENPEEPEEVREQDQR) and 114 to 137 (KAREPRQLRHTREPRKSREAKETE). THEG repeat units lie at residues 174 to 192 (RKCFSSRKRTPNLSKPKKQ), 214 to 233 (GALKAQLTKRLENLAQPKEV), 260 to 279 (PALFRQPSKRIQRLSQPNGF), 297 to 316 (SLRISDPSPRILQLSVAKGT), 333 to 352 (STLSAIATPRIIELAHPRIK), 373 to 392 (AAMIAKPSPRTIALAKSKSV), 409 to 428 (ATTHSKASPRIQELANPNKR), and 446 to 465 (AALKAQCSQRIWELSQPLTR).

The protein is Sperm microtubule associated protein 2-like of Homo sapiens (Human).